The chain runs to 273 residues: MSIDFDWSKLDSELEAKVLHLLEGQVSNLSLPSYIKHLKVVDFHFGKVSPQITIQEIGDPDPQFYENEAFELANQELEGDQCSRNNVSPVLTDLPPYAAEHPFSRLAYFNPAFNSPGILSASGLTSPIPESRPSTPMDNHQERDRSNDFQVTAHVSYDGDANLSLEAVLSMNYPNSEFAVLPFKLSFIRISIDAIAVLAKMGKRTHLCFVDTLLHGTGEHASSVIRDLTVESIIGESNKQLLKNVAKVEKFVSEKVKRIIEDELVWPSYITIE.

The SMP-LTD domain maps to 1–273 (MSIDFDWSKL…LVWPSYITIE (273 aa)). The segment at 124-145 (LTSPIPESRPSTPMDNHQERDR) is disordered.

The protein belongs to the MDM12 family. Component of the ER-mitochondria encounter structure (ERMES) or MDM complex, composed of mmm1, mdm10, mdm12 and mdm34. A mmm1 homodimer associates with one molecule of mdm12 on each side in a pairwise head-to-tail manner, and the SMP-LTD domains of mmm1 and mdm12 generate a continuous hydrophobic tunnel for phospholipid trafficking.

Its subcellular location is the mitochondrion outer membrane. The protein localises to the endoplasmic reticulum membrane. In terms of biological role, component of the ERMES/MDM complex, which serves as a molecular tether to connect the endoplasmic reticulum (ER) and mitochondria. Components of this complex are involved in the control of mitochondrial shape and protein biogenesis, and function in nonvesicular lipid trafficking between the ER and mitochondria. Mdm12 is required for the interaction of the ER-resident membrane protein mmm1 and the outer mitochondrial membrane-resident beta-barrel protein mdm10. The mdm12-mmm1 subcomplex functions in the major beta-barrel assembly pathway that is responsible for biogenesis of all mitochondrial outer membrane beta-barrel proteins, and acts in a late step after the SAM complex. The mdm10-mdm12-mmm1 subcomplex further acts in the TOM40-specific pathway after the action of the mdm12-mmm1 complex. Essential for establishing and maintaining the structure of mitochondria and maintenance of mtDNA nucleoids. This chain is Mitochondrial distribution and morphology protein 12, found in Schizosaccharomyces pombe (strain 972 / ATCC 24843) (Fission yeast).